The sequence spans 90 residues: Cell division protein CrgA (90 aa).

A disordered region spans residues 1 to 25 (MPKARVTKNETAPVSSNPSANRTPV). The span at 9-22 (NETAPVSSNPSANR) shows a compositional bias: polar residues. A run of 2 helical transmembrane segments spans residues 38–58 (VIMF…YLVG) and 67–87 (LGAW…LMTM).

The protein belongs to the CrgA family.

The protein localises to the cell membrane. Involved in cell division. The chain is Cell division protein CrgA from Corynebacterium glutamicum (strain ATCC 13032 / DSM 20300 / JCM 1318 / BCRC 11384 / CCUG 27702 / LMG 3730 / NBRC 12168 / NCIMB 10025 / NRRL B-2784 / 534).